The following is a 407-amino-acid chain: tRNA (guanine(9)-N1)-methyltransferase (407 aa).

Basic and acidic residues predominate over residues 1–19; that stretch reads MDLDPAHKPSQAEETKEQG. Disordered stretches follow at residues 1–105 and 220–256; these read MDLD…VRKR and ENMI…PRPE. The segment covering 20–32 has biased composition (low complexity); sequence NEQGQVEQNQAQQ. Residues 91–103 are compositionally biased toward basic residues; sequence LKRKDSRIARKVR. The SAM-dependent MTase TRM10-type domain occupies 120 to 356; that stretch reads ANKQKPPSVN…SVIPKRKGGK (237 aa). Residues 263–264, Gly283, 287–291, Cys295, Leu309, and 321–323 contribute to the S-adenosyl-L-methionine site; these read LS, DKNRE, and TVL. Asp287 (proton acceptor) is an active-site residue. The tract at residues 353–407 is disordered; the sequence is KGGKLKEQQGASGETQETEEAEAEDPEEENEETKDPDAEASASKQNTPKVEVTSK. A compositionally biased stretch (acidic residues) spans 368–386; the sequence is QETEEAEAEDPEEENEETK. Positions 394–407 are enriched in polar residues; it reads ASKQNTPKVEVTSK.

It belongs to the class IV-like SAM-binding methyltransferase superfamily. TRM10 family. In terms of assembly, monomer.

The protein localises to the cytoplasm. The protein resides in the nucleus. The enzyme catalyses guanosine(9) in tRNA + S-adenosyl-L-methionine = N(1)-methylguanosine(9) in tRNA + S-adenosyl-L-homocysteine + H(+). Its function is as follows. S-adenosyl-L-methionine-dependent guanine N(1)-methyltransferase that catalyzes the formation of N(1)-methylguanine at position 9 (m1G9) in cytoplasmic tRNA. The polypeptide is tRNA (guanine(9)-N1)-methyltransferase (Gibberella zeae (strain ATCC MYA-4620 / CBS 123657 / FGSC 9075 / NRRL 31084 / PH-1) (Wheat head blight fungus)).